The primary structure comprises 367 residues: Ribosomal lysine N-methyltransferase 5 (367 aa).

The segment at 55–74 (EGGRKKKRVRRRNKASSVEE) is disordered. Positions 58-68 (RKKKRVRRRNK) are enriched in basic residues. S-adenosyl-L-methionine contacts are provided by residues tryptophan 110, 170-172 (GAG), aspartate 192, tryptophan 256, and methionine 288.

Belongs to the class I-like SAM-binding methyltransferase superfamily. RKM5 family.

S-adenosyl-L-methionine-dependent protein-lysine N-methyltransferase that monomethylates 60S ribosomal protein L1 (RPL1A and RPL1B) at 'Lys-46'. This Saccharomyces cerevisiae (strain Lalvin EC1118 / Prise de mousse) (Baker's yeast) protein is Ribosomal lysine N-methyltransferase 5 (RKM5).